Reading from the N-terminus, the 418-residue chain is MPMLNAQQFLNQFSLEAPLDESLYPIIRDICQEVKVHGDKALKMYNLTFDHTKTDHLEISHEQIKAAFDTLDEKTKQALQQSYERIKAYQESIKQTNQQLEESVECYEIYHPLESVGIYVPGGKASYPSTVLMTATLAQVAGVENIVVVTPPQPNGVSQEVLAACYITQVNQVFQVGGAQSIAALTYGTETIPKVDKIVGPGNQFVAYAKKYLFGQVGIDQIAGPTEIALIIDDTADLDAIVYDVFAQAEHDELARTYVIGEDAQVLKDLESRIAKALPNVDRYDIVSKSIANQHYLIHASNFDEACHVMNTIAPEHASIQTVNPQPYIEKVKYVGALFIGHYSPEVIGDYVAGPSHVLPTNRTARFTNGLSVNDFLTRNTVIHLSKDTFEQIADSAQHIAHVEALYNHQQSILIRQS.

The NAD(+) site is built by Y119, Q180, and N203. The substrate site is built by T226, Q248, and H251. Zn(2+) contacts are provided by Q248 and H251. Residues E316 and H317 each act as proton acceptor in the active site. Substrate is bound by residues H317, D350, E404, and H409. Residue D350 participates in Zn(2+) binding. H409 lines the Zn(2+) pocket.

Belongs to the histidinol dehydrogenase family. It depends on Zn(2+) as a cofactor.

It catalyses the reaction L-histidinol + 2 NAD(+) + H2O = L-histidine + 2 NADH + 3 H(+). The protein operates within amino-acid biosynthesis; L-histidine biosynthesis; L-histidine from 5-phospho-alpha-D-ribose 1-diphosphate: step 9/9. Functionally, catalyzes the sequential NAD-dependent oxidations of L-histidinol to L-histidinaldehyde and then to L-histidine. The sequence is that of Histidinol dehydrogenase from Staphylococcus aureus (strain MSSA476).